Consider the following 325-residue polypeptide: GMP reductase (325 aa).

Cysteine 174 (thioimidate intermediate) is an active-site residue. 203–226 (LIADGGIRTHGDIAKSIRFGASMV) is a binding site for NADP(+).

Belongs to the IMPDH/GMPR family. GuaC type 2 subfamily.

The catalysed reaction is IMP + NH4(+) + NADP(+) = GMP + NADPH + 2 H(+). Functionally, catalyzes the irreversible NADPH-dependent deamination of GMP to IMP. It functions in the conversion of nucleobase, nucleoside and nucleotide derivatives of G to A nucleotides, and in maintaining the intracellular balance of A and G nucleotides. This chain is GMP reductase, found in Staphylococcus aureus (strain NCTC 8325 / PS 47).